We begin with the raw amino-acid sequence, 318 residues long: Methionyl-tRNA formyltransferase (318 aa).

(6S)-5,6,7,8-tetrahydrofolate is bound at residue 112-115 (SLLP).

The protein belongs to the Fmt family.

It carries out the reaction L-methionyl-tRNA(fMet) + (6R)-10-formyltetrahydrofolate = N-formyl-L-methionyl-tRNA(fMet) + (6S)-5,6,7,8-tetrahydrofolate + H(+). In terms of biological role, attaches a formyl group to the free amino group of methionyl-tRNA(fMet). The formyl group appears to play a dual role in the initiator identity of N-formylmethionyl-tRNA by promoting its recognition by IF2 and preventing the misappropriation of this tRNA by the elongation apparatus. The polypeptide is Methionyl-tRNA formyltransferase (Citrifermentans bemidjiense (strain ATCC BAA-1014 / DSM 16622 / JCM 12645 / Bem) (Geobacter bemidjiensis)).